Reading from the N-terminus, the 183-residue chain is ATP synthase subunit delta (183 aa).

This sequence belongs to the ATPase delta chain family. As to quaternary structure, F-type ATPases have 2 components, F(1) - the catalytic core - and F(0) - the membrane proton channel. F(1) has five subunits: alpha(3), beta(3), gamma(1), delta(1), epsilon(1). F(0) has three main subunits: a(1), b(2) and c(10-14). The alpha and beta chains form an alternating ring which encloses part of the gamma chain. F(1) is attached to F(0) by a central stalk formed by the gamma and epsilon chains, while a peripheral stalk is formed by the delta and b chains.

Its subcellular location is the cell membrane. F(1)F(0) ATP synthase produces ATP from ADP in the presence of a proton or sodium gradient. F-type ATPases consist of two structural domains, F(1) containing the extramembraneous catalytic core and F(0) containing the membrane proton channel, linked together by a central stalk and a peripheral stalk. During catalysis, ATP synthesis in the catalytic domain of F(1) is coupled via a rotary mechanism of the central stalk subunits to proton translocation. In terms of biological role, this protein is part of the stalk that links CF(0) to CF(1). It either transmits conformational changes from CF(0) to CF(1) or is implicated in proton conduction. The protein is ATP synthase subunit delta of Oenococcus oeni (strain ATCC BAA-331 / PSU-1).